Reading from the N-terminus, the 131-residue chain is Probable lactoylglutathione lyase (131 aa).

Positions 2–126 constitute a VOC domain; that stretch reads FLLHTMIRVG…DGYKIELIQT (125 aa). Histidine 5 provides a ligand contact to Ni(2+). Residue arginine 9 participates in substrate binding. Glutamate 56 serves as a coordination point for Ni(2+). Substrate contacts are provided by asparagine 60 and histidine 74. Residues histidine 74 and glutamate 122 each contribute to the Ni(2+) site. The active-site Proton donor/acceptor is glutamate 122.

The protein belongs to the glyoxalase I family. Ni(2+) is required as a cofactor.

It catalyses the reaction (R)-S-lactoylglutathione = methylglyoxal + glutathione. The protein operates within secondary metabolite metabolism; methylglyoxal degradation; (R)-lactate from methylglyoxal: step 1/2. Functionally, catalyzes the conversion of hemimercaptal, formed from methylglyoxal and glutathione, to S-lactoylglutathione. This chain is Probable lactoylglutathione lyase (gloA), found in Synechocystis sp. (strain ATCC 27184 / PCC 6803 / Kazusa).